The chain runs to 580 residues: MGEKAVPLLRRRRVKRSCPSCGPELGVEEKKGKGNPISIQLFPPELVEHIISFLPVRDLVALGQTCRYFHEVCDAEGVWRRICRRLSPRLRDQGSGVRPWKRAAILNYTKGLYFQAFGGRRRCLSKSVAPLLAHGYRRFLPTKDHVFILDYVGTLFFLKNALVSTLGQMQWKRACRYVVLCRGAKDFASDPRCDTVYRKYLYVLATREQQEVVGTTSSRACDCVEVYLQSSGQRVFKMTFHHSMTFKQIVLVGQETQRALLLLTEEGKIYSLVVNETQLDQPRSYTVQLALRKVSHYLPHLRVACMTSNQSSTLYVTDQGGVYFEVHTPGVYRDLFGTLQAFDPLDQQMPLALSLPAKILFCALGYNHLGLVDEFGRIFMQGNNRYGQLGTGDKMDRGEPTQVRYLQRPITLWCGLNHSLVLSQSSEFSKELLGCGCGAGGRLPGWPKGSASFVKLQVKVPLCACALCATRECLYILSSHDIEQHTPYRDLPASRVVGIPEPSLGTGAPQDPGGTAQACEEYLSQIHSCHTLQDRMEKMKEIVGWMPLMAAQKDFFWEALDMLQKAEGGGGGVGPPASET.

Residues Pro-36 to Ile-82 form the F-box domain. The stretch at Gly-376 to Ser-425 is one RCC1 repeat.

As to quaternary structure, directly interacts with SKP1 and CUL1.

Functionally, substrate-recognition component of the SCF (SKP1-CUL1-F-box protein)-type E3 ubiquitin ligase complex. The polypeptide is F-box only protein 24 (FBXO24) (Macaca fascicularis (Crab-eating macaque)).